A 212-amino-acid chain; its full sequence is ATP-dependent dethiobiotin synthetase BioD (212 aa).

13 to 18 (GIGKTV) is a binding site for ATP. Mg(2+) is bound at residue Thr-17. Residue Lys-33 is part of the active site. Substrate is bound at residue Ser-37. Glu-100 contributes to the Mg(2+) binding site. Residues 100–103 (EGAG) and 184–186 (PRL) contribute to the ATP site.

Belongs to the dethiobiotin synthetase family. As to quaternary structure, homodimer. Mg(2+) is required as a cofactor.

Its subcellular location is the cytoplasm. It carries out the reaction (7R,8S)-7,8-diammoniononanoate + CO2 + ATP = (4R,5S)-dethiobiotin + ADP + phosphate + 3 H(+). Its pathway is cofactor biosynthesis; biotin biosynthesis; biotin from 7,8-diaminononanoate: step 1/2. In terms of biological role, catalyzes a mechanistically unusual reaction, the ATP-dependent insertion of CO2 between the N7 and N8 nitrogen atoms of 7,8-diaminopelargonic acid (DAPA, also called 7,8-diammoniononanoate) to form a ureido ring. This chain is ATP-dependent dethiobiotin synthetase BioD, found in Rhodopseudomonas palustris (strain TIE-1).